A 244-amino-acid chain; its full sequence is MKHPPCSVVAAATAILAVVLAIGGCSTEGDAGKASDTAATASNGDAAMLLKQATDAMRKVTGMHVRLAVTGDVPNLRVTKLEGDISNTPQTVATGSATLLVGNKSEDAKFVYVDGHLYSDLGQPGTYTDFGNGTSIYNVSVLLDPNKGLANLLANLKDASVAGSQQADGVATTKITGNSSADDIATLAGSRLTSEDVKTVPTTVWIASDGSSHLVQIQIAPTKDTSVTLTMSDWGKQVTATKPV.

The first 24 residues, 1 to 24 (MKHPPCSVVAAATAILAVVLAIGG), serve as a signal peptide directing secretion. A lipid anchor (N-palmitoyl cysteine) is attached at cysteine 25. The S-diacylglycerol cysteine moiety is linked to residue cysteine 25.

This sequence belongs to the LppX/LprAFG lipoprotein family.

The protein localises to the cell membrane. In Mycobacterium bovis (strain ATCC BAA-935 / AF2122/97), this protein is Putative lipoprotein LprA (lprA).